A 188-amino-acid chain; its full sequence is MIVNEFEKLTAGKLLLASATMLESNFKRTVLLMCEHNEEGSLGFILNRPLEFKVREAIHGFNDVDDVLHQGGPVQVNSIHFLHSRGDLIHNSQEVLPGIYWGGNKDEVSYLLNTGVMHPSEIRFYLGYAGWSAGQLFSEFEEGAWYTAEATPDVIFSDAYERMWSRTVRAKGGAYQLIANSPELPGMN.

This sequence belongs to the UPF0301 (AlgH) family.

The protein is UPF0301 protein Cag_1601 of Chlorobium chlorochromatii (strain CaD3).